The following is a 529-amino-acid chain: Peptide chain release factor 3 (529 aa).

The tr-type G domain maps to 10 to 278 (ARRRTFAIIS…MFVEFAPGPQ (269 aa)). Residues 19-26 (SHPDAGKT), 87-91 (DTPGH), and 141-144 (NKMD) each bind GTP.

It belongs to the TRAFAC class translation factor GTPase superfamily. Classic translation factor GTPase family. PrfC subfamily.

It localises to the cytoplasm. In terms of biological role, increases the formation of ribosomal termination complexes and stimulates activities of RF-1 and RF-2. It binds guanine nucleotides and has strong preference for UGA stop codons. It may interact directly with the ribosome. The stimulation of RF-1 and RF-2 is significantly reduced by GTP and GDP, but not by GMP. In Nitratidesulfovibrio vulgaris (strain DSM 19637 / Miyazaki F) (Desulfovibrio vulgaris), this protein is Peptide chain release factor 3.